Here is a 520-residue protein sequence, read N- to C-terminus: Intermediate filament protein ON3 (520 aa).

Over residues 1 to 27 the composition is skewed to low complexity; sequence MSYTKKTSYSVKSSSSGSVPRSFSSMS. The disordered stretch occupies residues 1 to 33; sequence MSYTKKTSYSVKSSSSGSVPRSFSSMSYSGPSV. Residues 1-108 form a head region; the sequence is MSYTKKTSYS…DPNIQVVRTQ (108 aa). The coil 1A stretch occupies residues 109 to 144; sequence EKEQMKSLNNRFASFIDKVRFLEQQNKMLETKWSLL. In terms of domain architecture, IF rod spans 109-420; the sequence is EKEQMKSLNN…KLLEGEEDRL (312 aa). The segment at 145-157 is linker 1; it reads QNQTATRSNIDAM. The tract at residues 158 to 253 is coil 1B; it reads FEAYINNLRR…QIFEEEIREL (96 aa). The linker 12 stretch occupies residues 254–273; sequence QSQIKDTSVVVEMDNSRNLD. The tract at residues 274–420 is coil 2; sequence MDAIVAEVRA…KLLEGEEDRL (147 aa). The segment at 421–520 is tail; the sequence is LSGIKSVNIS…VSESSEVVQD (100 aa).

Belongs to the intermediate filament family.

In terms of biological role, one of the non-neuronal predominant intermediate filament proteins of the visual pathway. The chain is Intermediate filament protein ON3 from Carassius auratus (Goldfish).